We begin with the raw amino-acid sequence, 129 residues long: ATP synthase epsilon chain (129 aa).

This sequence belongs to the ATPase epsilon chain family. As to quaternary structure, F-type ATPases have 2 components, CF(1) - the catalytic core - and CF(0) - the membrane proton channel. CF(1) has five subunits: alpha(3), beta(3), gamma(1), delta(1), epsilon(1). CF(0) has three main subunits: a, b and c.

The protein resides in the cell inner membrane. Its function is as follows. Produces ATP from ADP in the presence of a proton gradient across the membrane. In Nitratiruptor sp. (strain SB155-2), this protein is ATP synthase epsilon chain.